Reading from the N-terminus, the 244-residue chain is Ribonuclease 3 (244 aa).

The region spanning 7–134 (FEEVEKTLNI…IIAAIYIDSG (128 aa)) is the RNase III domain. Position 47 (E47) interacts with Mg(2+). Residue D51 is part of the active site. Residues N120 and E123 each coordinate Mg(2+). The active site involves E123. Positions 161–230 (DYKTNLQEIV…AQDALKKLKS (70 aa)) constitute a DRBM domain.

Belongs to the ribonuclease III family. In terms of assembly, homodimer. Mg(2+) serves as cofactor.

It is found in the cytoplasm. It carries out the reaction Endonucleolytic cleavage to 5'-phosphomonoester.. Digests double-stranded RNA. Involved in the processing of primary rRNA transcript to yield the immediate precursors to the large and small rRNAs (23S and 16S). Processes some mRNAs, and tRNAs when they are encoded in the rRNA operon. Processes pre-crRNA and tracrRNA of type II CRISPR loci if present in the organism. This is Ribonuclease 3 from Clostridium kluyveri (strain NBRC 12016).